Reading from the N-terminus, the 87-residue chain is Long neurotoxin homolog (87 aa).

Residues methionine 1–threonine 21 form the signal peptide. 5 disulfide bridges follow: cysteine 24/cysteine 47, cysteine 27/cysteine 32, cysteine 40/cysteine 64, cysteine 68/cysteine 80, and cysteine 81/cysteine 86.

Expressed by the venom gland.

The protein resides in the secreted. Functionally, inhibits carbachol-induced muscle contraction in a reversible manner. This chain is Long neurotoxin homolog, found in Bungarus multicinctus (Many-banded krait).